The chain runs to 212 residues: ATP-dependent Clp protease proteolytic subunit (212 aa).

Ser-114 serves as the catalytic Nucleophile. His-139 is an active-site residue.

It belongs to the peptidase S14 family. As to quaternary structure, fourteen ClpP subunits assemble into 2 heptameric rings which stack back to back to give a disk-like structure with a central cavity, resembling the structure of eukaryotic proteasomes.

It localises to the cytoplasm. It catalyses the reaction Hydrolysis of proteins to small peptides in the presence of ATP and magnesium. alpha-casein is the usual test substrate. In the absence of ATP, only oligopeptides shorter than five residues are hydrolyzed (such as succinyl-Leu-Tyr-|-NHMec, and Leu-Tyr-Leu-|-Tyr-Trp, in which cleavage of the -Tyr-|-Leu- and -Tyr-|-Trp bonds also occurs).. In terms of biological role, cleaves peptides in various proteins in a process that requires ATP hydrolysis. Has a chymotrypsin-like activity. Plays a major role in the degradation of misfolded proteins. This Laribacter hongkongensis (strain HLHK9) protein is ATP-dependent Clp protease proteolytic subunit.